Here is a 419-residue protein sequence, read N- to C-terminus: Multiple organellar RNA editing factor 1, mitochondrial (419 aa).

Residues 1 to 60 (MAMISHRLRRALLTATSYVNRSISSSITPASDFPSVSAAVLKRSVIGRSTEVATRAPARL) constitute a mitochondrion transit peptide. The tract at residues 174-401 (KEYGGDKYEN…AGQPGSDQVR (228 aa)) is disordered. The segment covering 237 to 252 (GPQQGYATPGQGQGTQ) has biased composition (low complexity). The segment covering 310–327 (GQGGSGNYSQGPQGGYNQ) has biased composition (gly residues). Positions 342-356 (GPASGAGNLGPAPGA) are enriched in low complexity. Residues 357 to 367 (GNPGYGQGYSG) are compositionally biased toward gly residues. Positions 371–401 (EQNQTFPQADQRNRDWNNNNPAGQPGSDQVR) are enriched in polar residues.

Belongs to the MORF family. In terms of assembly, homodimer and heterodimer with MORF3. Heterodimers with MORF8/RIP1, MORF4/RIP4 and MORF6/RIP6. Interacts with PCMP-E90/MEF13. Interacts with PCMP-H13/MEF35.

It localises to the mitochondrion. Involved in organellar RNA editing. Required for the processing of numerous RNA editing sites in mitochondria. Binds to the mitochondrial MEF19 and MEF21 factors, two pentatricopeptide repeat-containing proteins involved in RNA editing. This Arabidopsis thaliana (Mouse-ear cress) protein is Multiple organellar RNA editing factor 1, mitochondrial.